The sequence spans 345 residues: MKNFHIEYPDEGLREALIDKINNLTKPKGSLGVLEDLALQIGLIQQTLSPTLSHPHNVLFAADHGIVEEGVSKSPKEITWQQLSNFLHGGAGVNFLCRQHGFKLVLVDSGVDYDLPYEKGIINCSVGRGTHSFLKGPAMSMEEMELCLERGAKITDMIHADGCNVVSFGEMGIGNTSPSSVWMHLLTGISLEQCVGAGSGLDSEGIRHKYNVLKQSVDHYAGDGSAKDIIAWFGGYEMVMAIGGMLRAAELRMIILVDGFIMTNCILAASKLHPEVLSYAIFGHQGDETGHKLVLDAMKVRPLLNLGLRLGEGTGAICAYPIVVSSVNMMNEMDNFAHASITKYF.

The active-site Proton acceptor is the glutamate 312.

The protein belongs to the CobT family.

The enzyme catalyses 5,6-dimethylbenzimidazole + nicotinate beta-D-ribonucleotide = alpha-ribazole 5'-phosphate + nicotinate + H(+). The protein operates within nucleoside biosynthesis; alpha-ribazole biosynthesis; alpha-ribazole from 5,6-dimethylbenzimidazole: step 1/2. Catalyzes the synthesis of alpha-ribazole-5'-phosphate from nicotinate mononucleotide (NAMN) and 5,6-dimethylbenzimidazole (DMB). This Phocaeicola vulgatus (strain ATCC 8482 / DSM 1447 / JCM 5826 / CCUG 4940 / NBRC 14291 / NCTC 11154) (Bacteroides vulgatus) protein is Nicotinate-nucleotide--dimethylbenzimidazole phosphoribosyltransferase.